Consider the following 477-residue polypeptide: Protoporphyrinogen oxidase (477 aa).

FAD contacts are provided by residues 9-14, tryptophan 42, 57-60, valine 257, alanine 449, and 454-456; these read GGGISG, GPRG, and VAV.

This sequence belongs to the protoporphyrinogen/coproporphyrinogen oxidase family. Protoporphyrinogen oxidase subfamily. In terms of assembly, monomer. Homodimer. It depends on FAD as a cofactor.

It is found in the mitochondrion inner membrane. It catalyses the reaction protoporphyrinogen IX + 3 O2 = protoporphyrin IX + 3 H2O2. It participates in porphyrin-containing compound metabolism; protoporphyrin-IX biosynthesis; protoporphyrin-IX from protoporphyrinogen-IX: step 1/1. Its function is as follows. Catalyzes the 6-electron oxidation of protoporphyrinogen-IX to form protoporphyrin-IX. This is Protoporphyrinogen oxidase (PPOX) from Macaca fascicularis (Crab-eating macaque).